Here is a 319-residue protein sequence, read N- to C-terminus: Acetyl-coenzyme A carboxylase carboxyl transferase subunit alpha (319 aa).

One can recognise a CoA carboxyltransferase C-terminal domain in the interval 35–296 (NIDEEVHRLR…KAQLLADLAD (262 aa)).

This sequence belongs to the AccA family. In terms of assembly, acetyl-CoA carboxylase is a heterohexamer composed of biotin carboxyl carrier protein (AccB), biotin carboxylase (AccC) and two subunits each of ACCase subunit alpha (AccA) and ACCase subunit beta (AccD).

The protein localises to the cytoplasm. It catalyses the reaction N(6)-carboxybiotinyl-L-lysyl-[protein] + acetyl-CoA = N(6)-biotinyl-L-lysyl-[protein] + malonyl-CoA. The protein operates within lipid metabolism; malonyl-CoA biosynthesis; malonyl-CoA from acetyl-CoA: step 1/1. In terms of biological role, component of the acetyl coenzyme A carboxylase (ACC) complex. First, biotin carboxylase catalyzes the carboxylation of biotin on its carrier protein (BCCP) and then the CO(2) group is transferred by the carboxyltransferase to acetyl-CoA to form malonyl-CoA. The polypeptide is Acetyl-coenzyme A carboxylase carboxyl transferase subunit alpha (Klebsiella pneumoniae (strain 342)).